A 629-amino-acid chain; its full sequence is 1-deoxy-D-xylulose-5-phosphate synthase (629 aa).

Thiamine diphosphate is bound by residues His-72 and 113 to 115; that span reads GHA. Position 144 (Asp-144) interacts with Mg(2+). Thiamine diphosphate contacts are provided by residues 145-146, Asn-174, Tyr-287, and Glu-370; that span reads GA. Position 174 (Asn-174) interacts with Mg(2+).

It belongs to the transketolase family. DXPS subfamily. Homodimer. It depends on Mg(2+) as a cofactor. Thiamine diphosphate serves as cofactor.

It carries out the reaction D-glyceraldehyde 3-phosphate + pyruvate + H(+) = 1-deoxy-D-xylulose 5-phosphate + CO2. Its pathway is metabolic intermediate biosynthesis; 1-deoxy-D-xylulose 5-phosphate biosynthesis; 1-deoxy-D-xylulose 5-phosphate from D-glyceraldehyde 3-phosphate and pyruvate: step 1/1. In terms of biological role, catalyzes the acyloin condensation reaction between C atoms 2 and 3 of pyruvate and glyceraldehyde 3-phosphate to yield 1-deoxy-D-xylulose-5-phosphate (DXP). This is 1-deoxy-D-xylulose-5-phosphate synthase from Prochlorococcus marinus (strain MIT 9312).